Consider the following 407-residue polypeptide: Tryptophan synthase beta chain (407 aa).

Lys-91 carries the post-translational modification N6-(pyridoxal phosphate)lysine.

The protein belongs to the TrpB family. As to quaternary structure, tetramer of two alpha and two beta chains. The cofactor is pyridoxal 5'-phosphate.

It catalyses the reaction (1S,2R)-1-C-(indol-3-yl)glycerol 3-phosphate + L-serine = D-glyceraldehyde 3-phosphate + L-tryptophan + H2O. Its pathway is amino-acid biosynthesis; L-tryptophan biosynthesis; L-tryptophan from chorismate: step 5/5. Functionally, the beta subunit is responsible for the synthesis of L-tryptophan from indole and L-serine. The sequence is that of Tryptophan synthase beta chain from Streptococcus pneumoniae (strain 70585).